Reading from the N-terminus, the 876-residue chain is Vacuolar protein sorting-associated protein 39 homolog (876 aa).

The 297-residue stretch at 14–310 (GVQIESIAAY…KFLVHADKGT (297 aa)) folds into the CNH domain. Residues 578–741 (ELIEVESLPR…ILIPPTQPLY (164 aa)) form a CHCR repeat.

It belongs to the VAM6/VPS39 family. Part of the homotypic fusion and vacuole protein sorting (HOPS) complex, composed of Vps16A, car/Vps33A, dor/Vps18, Vps39, Vps11 and lt/Vps41. Interacts with Rab2 (GTP-bound form); the interaction is probably direct.

It is found in the cytoplasm. The protein resides in the lysosome membrane. Its subcellular location is the late endosome membrane. It localises to the late endosome. The protein localises to the lysosome. In terms of biological role, part of the homotypic fusion and vacuole protein sorting (HOPS) tethering complex involved in endo-lysosomal vesicle trafficking and lysosome biogenesis. The HOPS complex facilitates docking and fusion of lysosomes with late endosomes and several other types of vesicles. The HOPS complex is also involved in autophagy and crinophagy (the elimination of unused secretory granules through their fusion with lysosomes). The HOPS complex mediates autophagocitic flux, probably by binding autophagosome-associated Syx17/syntaxin 17, promoting assembly of the trans-SNARE complex and instigating autophagosome-lysosome fusion. Independent of Syx17/syntaxin 17, HOPS is involved in biosynthetic transport to lysosomes and lysosome-related organelles such as eye-pigment granules. Required for autophagocytosis-dependent remodeling of myofibrils and transverse-tubules (T-tubules) during metamorphosis. This is Vacuolar protein sorting-associated protein 39 homolog from Drosophila melanogaster (Fruit fly).